A 554-amino-acid polypeptide reads, in one-letter code: Phospho-2-dehydro-3-deoxyheptonate aldolase 1, chloroplastic (554 aa).

The N-terminal 39 residues, 1–39, are a transit peptide targeting the chloroplast; the sequence is MSLATSSSMAGGAAVVPRSATATTASAFVTMKRRATAVR. Positions 41–70 are disordered; the sequence is VHAAEPSKNPPVGVPSAAKTSSPSVAAPEK.

The protein belongs to the class-II DAHP synthase family.

It is found in the plastid. Its subcellular location is the chloroplast. It catalyses the reaction D-erythrose 4-phosphate + phosphoenolpyruvate + H2O = 7-phospho-2-dehydro-3-deoxy-D-arabino-heptonate + phosphate. It functions in the pathway metabolic intermediate biosynthesis; chorismate biosynthesis; chorismate from D-erythrose 4-phosphate and phosphoenolpyruvate: step 1/7. This chain is Phospho-2-dehydro-3-deoxyheptonate aldolase 1, chloroplastic (DAHPS1), found in Oryza sativa subsp. japonica (Rice).